Reading from the N-terminus, the 575-residue chain is Pre-hexon-linking protein IIIa (575 aa).

A peripentonal hexon-tethering domain region spans residues 1–95 (MTSSDTFLAL…DLLNRAYTWN (95 aa)). Residues 129 to 243 (ANASLLTQFF…FYDYGAMEPG (115 aa)) form a binding to hexon-linking protein region. Ser497 bears the Phosphoserine; by host mark. Residues 515 to 575 (GGPGFFASLR…SRRGRKLRFY (61 aa)) constitute a propeptide that is removed on maturation. A disordered region spans residues 525-549 (PSIGSRQPTGTAVGLRPTTPYSGSG).

This sequence belongs to the adenoviridae hexon-linking protein IIIa family. As to quaternary structure, interacts with hexon proteins; this interaction tethers the peripentonal hexons to hexons situated in the facet. Interacts with the penton protein (via N-terminus). Interacts with packaging protein 3; this interaction is required to promote correct genome packaging. Cleaved near the C-terminus by the viral protease during virion maturation to form the mature protein.

Its subcellular location is the virion. It localises to the host nucleus. In terms of biological role, structural component of the virion that acts as a cement protein on the capsid exterior which mediates the interactions between the hexons, including the peripentonal hexons, and reaches all the way to the penton vertices. Two hexon linking proteins IIIa, one from each facet, stabilize the unique edge interface between a pair of facets. As the virus enters the host cell, hexon linking proteins IIIa are shed concomitant with virion acidification in the endosome. During virus assembly, seems to play a role in the serotype specificity of the packaging of viral DNA via its interaction with packaging protein 3. This chain is Pre-hexon-linking protein IIIa, found in Galliformes (FAdV-1).